Here is a 161-residue protein sequence, read N- to C-terminus: Putative HTH-type transcriptional regulator MT1325 (161 aa).

The HTH rrf2-type domain maps to 2 to 132; the sequence is RMSAKAEYAV…EETTLADVAG (131 aa).

This is Putative HTH-type transcriptional regulator MT1325 from Mycobacterium tuberculosis (strain CDC 1551 / Oshkosh).